The following is a 262-amino-acid chain: MLQQKLNKLKDGLNTFSSKSVVCARSKLFDKRPTRRPRCWRKLSEIDKKFHVCRHVDTFLDLCGGPGEFANYTMSLNPLCKAYGVTLTNNSVCVYKPTVRKRKNFTTITGPDKSGDVFDKNVVFEISIKCGNACDLVLADGSVDVNGRENEQERLNFDLIMCETQLILICLRPGGNCVLKVFDAFEHETIQMLNKFVNHFEKWVLYKPPSSRPANSERYLICFNKLVRPYCNNYVNELEKQFEKYYRIQLKNLNKLINLLKI.

The 193-residue stretch at 34 to 226 (TRRPRCWRKL…ERYLICFNKL (193 aa)) folds into the RrmJ-type SAM-dependent 2'-O-MTase domain. G67 and D140 together coordinate S-adenosyl-L-methionine. Residue K180 is the Proton acceptor of the active site.

The catalysed reaction is a 5'-end (N(7)-methyl 5'-triphosphoguanosine)-ribonucleoside in mRNA + S-adenosyl-L-methionine = a 5'-end (N(7)-methyl 5'-triphosphoguanosine)-(2'-O-methyl-ribonucleoside) in mRNA + S-adenosyl-L-homocysteine + H(+). In terms of biological role, S-adenosyl-L-methionine-dependent methyltransferase that mediates mRNA cap 2'-O-ribose methylation to the 5'-cap structure of late viral transcripts. This Lepidoptera (butterflies and moths) protein is Cap-specific mRNA (nucleoside-2'-O-)-methyltransferase.